The chain runs to 273 residues: 4-hydroxy-tetrahydrodipicolinate reductase (273 aa).

Residues 12-17 (GAGGRM) and Glu38 each bind NAD(+). Arg39 contributes to the NADP(+) binding site. NAD(+) contacts are provided by residues 102 to 104 (GTT) and 126 to 129 (AANF). The Proton donor/acceptor role is filled by His159. His160 contributes to the (S)-2,3,4,5-tetrahydrodipicolinate binding site. Lys163 functions as the Proton donor in the catalytic mechanism. 169–170 (GT) contributes to the (S)-2,3,4,5-tetrahydrodipicolinate binding site.

The protein belongs to the DapB family. In terms of assembly, homotetramer.

It is found in the cytoplasm. It carries out the reaction (S)-2,3,4,5-tetrahydrodipicolinate + NAD(+) + H2O = (2S,4S)-4-hydroxy-2,3,4,5-tetrahydrodipicolinate + NADH + H(+). The enzyme catalyses (S)-2,3,4,5-tetrahydrodipicolinate + NADP(+) + H2O = (2S,4S)-4-hydroxy-2,3,4,5-tetrahydrodipicolinate + NADPH + H(+). The protein operates within amino-acid biosynthesis; L-lysine biosynthesis via DAP pathway; (S)-tetrahydrodipicolinate from L-aspartate: step 4/4. Catalyzes the conversion of 4-hydroxy-tetrahydrodipicolinate (HTPA) to tetrahydrodipicolinate. The protein is 4-hydroxy-tetrahydrodipicolinate reductase of Proteus mirabilis (strain HI4320).